A 463-amino-acid polypeptide reads, in one-letter code: Elongation factor 1-alpha (463 aa).

One can recognise a tr-type G domain in the interval 5-242 (KVHINIVVIG…DSIIPPQRPT (238 aa)). The interval 14 to 21 (GHVDSGKS) is G1. 14 to 21 (GHVDSGKS) is a binding site for GTP. Residues 70–74 (GITID) form a G2 region. Residues 91–94 (DAPG) form a G3 region. Residues 91-95 (DAPGH) and 153-156 (NKMD) contribute to the GTP site. The G4 stretch occupies residues 153 to 156 (NKMD). The tract at residues 194–196 (SGF) is G5. 5-glutamyl glycerylphosphorylethanolamine is present on residues glutamate 301 and glutamate 374. The segment at 443–463 (KSDGSSGKVTKSAQKAAPKKK) is disordered. Polar residues predominate over residues 446 to 455 (GSSGKVTKSA).

The protein belongs to the TRAFAC class translation factor GTPase superfamily. Classic translation factor GTPase family. EF-Tu/EF-1A subfamily.

It is found in the cytoplasm. In terms of biological role, this protein promotes the GTP-dependent binding of aminoacyl-tRNA to the A-site of ribosomes during protein biosynthesis. The polypeptide is Elongation factor 1-alpha (Caenorhabditis elegans).